Reading from the N-terminus, the 166-residue chain is Large ribosomal subunit protein uL10 (166 aa).

It belongs to the universal ribosomal protein uL10 family. In terms of assembly, part of the ribosomal stalk of the 50S ribosomal subunit. The N-terminus interacts with L11 and the large rRNA to form the base of the stalk. The C-terminus forms an elongated spine to which L12 dimers bind in a sequential fashion forming a multimeric L10(L12)X complex.

Its function is as follows. Forms part of the ribosomal stalk, playing a central role in the interaction of the ribosome with GTP-bound translation factors. The chain is Large ribosomal subunit protein uL10 (rplJ) from Neisseria meningitidis serogroup A / serotype 4A (strain DSM 15465 / Z2491).